The primary structure comprises 657 residues: Threonine--tRNA ligase (657 aa).

Residues 7 to 70 enclose the TGS domain; the sequence is DRQQVIITLP…TENARVSIIT (64 aa). The tract at residues 253 to 555 is catalytic; the sequence is DHRKLGAELG…LIEHTAGNFP (303 aa). Zn(2+)-binding residues include cysteine 351, histidine 402, and histidine 532.

The protein belongs to the class-II aminoacyl-tRNA synthetase family. In terms of assembly, homodimer. Requires Zn(2+) as cofactor.

The protein resides in the cytoplasm. The enzyme catalyses tRNA(Thr) + L-threonine + ATP = L-threonyl-tRNA(Thr) + AMP + diphosphate + H(+). Its function is as follows. Catalyzes the attachment of threonine to tRNA(Thr) in a two-step reaction: L-threonine is first activated by ATP to form Thr-AMP and then transferred to the acceptor end of tRNA(Thr). Also edits incorrectly charged L-seryl-tRNA(Thr). The chain is Threonine--tRNA ligase from Chlorobaculum tepidum (strain ATCC 49652 / DSM 12025 / NBRC 103806 / TLS) (Chlorobium tepidum).